Consider the following 428-residue polypeptide: Histidinol dehydrogenase (428 aa).

Tyr-125, Gln-186, and Asn-209 together coordinate NAD(+). Substrate is bound by residues Ser-232, Gln-254, and His-257. Residues Gln-254 and His-257 each coordinate Zn(2+). Active-site proton acceptor residues include Glu-322 and His-323. Residues His-323, Asp-356, Glu-410, and His-415 each coordinate substrate. Position 356 (Asp-356) interacts with Zn(2+). His-415 contacts Zn(2+).

The protein belongs to the histidinol dehydrogenase family. Zn(2+) is required as a cofactor.

It carries out the reaction L-histidinol + 2 NAD(+) + H2O = L-histidine + 2 NADH + 3 H(+). The protein operates within amino-acid biosynthesis; L-histidine biosynthesis; L-histidine from 5-phospho-alpha-D-ribose 1-diphosphate: step 9/9. Its function is as follows. Catalyzes the sequential NAD-dependent oxidations of L-histidinol to L-histidinaldehyde and then to L-histidine. This is Histidinol dehydrogenase from Lactiplantibacillus plantarum (strain ATCC BAA-793 / NCIMB 8826 / WCFS1) (Lactobacillus plantarum).